The sequence spans 142 residues: Transcriptional regulator MraZ (142 aa).

SpoVT-AbrB domains are found at residues 5–47 and 76–119; these read EFQH…PQHE and ATEC…SKEE.

It belongs to the MraZ family. Forms oligomers.

The protein resides in the cytoplasm. Its subcellular location is the nucleoid. This Desulforamulus reducens (strain ATCC BAA-1160 / DSM 100696 / MI-1) (Desulfotomaculum reducens) protein is Transcriptional regulator MraZ.